The following is a 641-amino-acid chain: 1-deoxy-D-xylulose-5-phosphate synthase (641 aa).

Residues His-78 and 119-121 (AHS) each bind thiamine diphosphate. Residue Asp-150 coordinates Mg(2+). Residues 151 to 152 (GA), Asn-179, Tyr-288, and Glu-370 contribute to the thiamine diphosphate site. Asn-179 provides a ligand contact to Mg(2+).

This sequence belongs to the transketolase family. DXPS subfamily. Homodimer. Mg(2+) is required as a cofactor. The cofactor is thiamine diphosphate.

It carries out the reaction D-glyceraldehyde 3-phosphate + pyruvate + H(+) = 1-deoxy-D-xylulose 5-phosphate + CO2. The protein operates within metabolic intermediate biosynthesis; 1-deoxy-D-xylulose 5-phosphate biosynthesis; 1-deoxy-D-xylulose 5-phosphate from D-glyceraldehyde 3-phosphate and pyruvate: step 1/1. Functionally, catalyzes the acyloin condensation reaction between C atoms 2 and 3 of pyruvate and glyceraldehyde 3-phosphate to yield 1-deoxy-D-xylulose-5-phosphate (DXP). The chain is 1-deoxy-D-xylulose-5-phosphate synthase from Azorhizobium caulinodans (strain ATCC 43989 / DSM 5975 / JCM 20966 / LMG 6465 / NBRC 14845 / NCIMB 13405 / ORS 571).